The following is a 36-amino-acid chain: Photosystem I reaction center subunit VIII (36 aa).

The helical transmembrane segment at 8 to 28 (SVLVPLVGLIFPAMAMASLFL) threads the bilayer.

The protein belongs to the PsaI family.

Its subcellular location is the plastid. It localises to the chloroplast thylakoid membrane. In terms of biological role, may help in the organization of the PsaL subunit. This Daucus carota (Wild carrot) protein is Photosystem I reaction center subunit VIII.